The following is an 853-amino-acid chain: MRGELPNKHHSYTFFVFLFFFLILFPDLSISVNTLSATESLTISSNKTIVSPGGVFELGFFRILGDSWYLGIWYKKISQRTYVWVANRDTPLSNPIGILKISNANLVILDNSDTHVWSTNLTGAVRSSVVAELLDNGNFVLRGSKINESDEFLWQSFDFPTDTLLPQMKLGRDHKRGLNRFVTSWKSSFDPSSGSFMFKLETLGLPEFFGFTSFLEVYRSGPWDGLRFSGILEMQQWDDIIYNFTENREEVAYTFRVTDHNSYSRLTINTVGRLEGFMWEPTQQEWNMFWFMPKDTCDLYGICGPYAYCDMSTSPTCNCIKGFQPLSPQDWASGDVTGRCRRKTQLTCGEDRFFRLMNMKIPATTAAIVDKRIGLKECEEKCKTHCNCTAYANSDIRNGGSGCIIWIGEFRDIRNYAADGQDLFVRLAAAEFGERRTIRGKIIGLIIGISLMLVLSFIIYCFWKKKQKRARATAAPIGYRDRIQELIITNGVVMSSGRRLLGEEEDLELPLTEFETVVMATENFSDSNILGRGGFGIVYKGRLLDGQEIAVKRLSEMSSQGTNEFKNEVRLIARLQHINLVRLLSCCIYADEKILIYEYLENGSLDSHLFETTQSSNKLNWQTRFSIINGIARGLLYLHQDSRFKIIHRDLKASNVLLDKNMTPKISDFGMARIFERDETEANTRKVVGTYGYMSPEYAMEGIFSVKSDVFSFGVLVLEIVSGKRNRGFHNSGQDNNLLGYTWENWKEGKGLEIVDSIIVDSSSSMSLFQPHEVLRCIQIGLLCVQERAEDRPKMSSVVLMLGSEKGEIPQPKRPGYCVGRSSLDTADSSSSTKRDSESLTVNQITVSVINAR.

Positions 1 to 31 (MRGELPNKHHSYTFFVFLFFFLILFPDLSIS) are cleaved as a signal peptide. Residues 32–441 (VNTLSATESL…FGERRTIRGK (410 aa)) are Extracellular-facing. The 121-residue stretch at 34 to 154 (TLSATESLTI…KINESDEFLW (121 aa)) folds into the Bulb-type lectin domain. N-linked (GlcNAc...) asparagine glycosylation is found at Asn-46, Asn-120, Asn-147, and Asn-243. In terms of domain architecture, EGF-like; atypical spans 293 to 329 (PKDTCDLYGICGPYAYCDMSTSPTCNCIKGFQPLSPQ). Disulfide bonds link Cys-297–Cys-309, Cys-303–Cys-317, Cys-378–Cys-403, and Cys-382–Cys-388. Residues 348 to 428 (CGEDRFFRLM…DGQDLFVRLA (81 aa)) enclose the PAN domain. Asn-387 carries N-linked (GlcNAc...) asparagine glycosylation. The chain crosses the membrane as a helical span at residues 442-462 (IIGLIIGISLMLVLSFIIYCF). At 463–853 (WKKKQKRARA…QITVSVINAR (391 aa)) the chain is on the cytoplasmic side. The region spanning 524-802 (FSDSNILGRG…PKMSSVVLML (279 aa)) is the Protein kinase domain. ATP-binding positions include 530-538 (LGRGGFGIV) and Lys-552. Phosphoserine is present on Ser-558. The caM-binding stretch occupies residues 613–631 (TQSSNKLNWQTRFSIINGI). The active-site Proton acceptor is the Asp-650. Ser-654 and Ser-667 each carry phosphoserine. Thr-684 carries the post-translational modification Phosphothreonine. A disordered region spans residues 807-838 (GEIPQPKRPGYCVGRSSLDTADSSSSTKRDSE). Over residues 822-832 (SSLDTADSSSS) the composition is skewed to low complexity. The residue at position 831 (Ser-831) is a Phosphoserine.

The protein belongs to the protein kinase superfamily. Ser/Thr protein kinase family.

It is found in the cell membrane. The enzyme catalyses L-seryl-[protein] + ATP = O-phospho-L-seryl-[protein] + ADP + H(+). The catalysed reaction is L-threonyl-[protein] + ATP = O-phospho-L-threonyl-[protein] + ADP + H(+). Its function is as follows. Female specificity determinant of self-incompatibility. This is G-type lectin S-receptor-like serine/threonine-protein kinase SRK (SRK) from Arabidopsis thaliana (Mouse-ear cress).